The chain runs to 338 residues: Ferredoxin--NADP reductase (338 aa).

Positions 36, 44, 49, 89, 123, 290, and 331 each coordinate FAD.

It belongs to the ferredoxin--NADP reductase type 2 family. Homodimer. The cofactor is FAD.

The enzyme catalyses 2 reduced [2Fe-2S]-[ferredoxin] + NADP(+) + H(+) = 2 oxidized [2Fe-2S]-[ferredoxin] + NADPH. This Anaplasma phagocytophilum (strain HZ) protein is Ferredoxin--NADP reductase.